Here is a 1004-residue protein sequence, read N- to C-terminus: UPF0182 protein Noca_1530 (1004 aa).

The interval 1 to 20 (MSELFDEAPRDPGPPARSGS) is disordered. Helical transmembrane passes span 26 to 46 (LIVTAVVLVIGFLGLSTFAGI), 71 to 91 (VLFFLFGAGMALVVGVNIYLA), 120 to 140 (TWLLVGVALVLGAFAGSSAIG), 183 to 203 (MAVLVVALIAAAVVHYLYGGI), 212 to 232 (LSGAAQAQISVLLGFFVLAKA), 261 to 281 (VLPAKNILLGISIICAVLFFV), and 293 to 313 (VGLALLAVSAILLGLIWPGIV). 2 disordered regions span residues 899–924 (GVSTGPGTQPPDTGQPGDNENPPPAT) and 974–1004 (LGQKRGSAGQPSGSPSGSASSSPSESPSPSS). Low complexity-rich tracts occupy residues 903–916 (GPGTQPPDTGQPGD) and 979–1004 (GSAGQPSGSPSGSASSSPSESPSPSS).

Belongs to the UPF0182 family.

The protein resides in the cell membrane. This Nocardioides sp. (strain ATCC BAA-499 / JS614) protein is UPF0182 protein Noca_1530.